The primary structure comprises 311 residues: Ribosomal RNA large subunit methyltransferase F (311 aa).

Belongs to the methyltransferase superfamily. METTL16/RlmF family.

Its subcellular location is the cytoplasm. It carries out the reaction adenosine(1618) in 23S rRNA + S-adenosyl-L-methionine = N(6)-methyladenosine(1618) in 23S rRNA + S-adenosyl-L-homocysteine + H(+). Specifically methylates the adenine in position 1618 of 23S rRNA. The sequence is that of Ribosomal RNA large subunit methyltransferase F from Pectobacterium carotovorum subsp. carotovorum (strain PC1).